The primary structure comprises 278 residues: MATH domain and coiled-coil domain-containing protein At1g31400 (278 aa).

In terms of domain architecture, MATH spans 6–131 (EKRITWTIKN…SGQVKIVAEV (126 aa)). Positions 232-267 (KLDWLEKKLKEVGKTRMQQLEQNLKDLKESLCWSSD) form a coiled coil.

The sequence is that of MATH domain and coiled-coil domain-containing protein At1g31400 from Arabidopsis thaliana (Mouse-ear cress).